Consider the following 136-residue polypeptide: Large ribosomal subunit protein uL16 (136 aa).

This sequence belongs to the universal ribosomal protein uL16 family. As to quaternary structure, part of the 50S ribosomal subunit.

In terms of biological role, binds 23S rRNA and is also seen to make contacts with the A and possibly P site tRNAs. This is Large ribosomal subunit protein uL16 from Bradyrhizobium diazoefficiens (strain JCM 10833 / BCRC 13528 / IAM 13628 / NBRC 14792 / USDA 110).